The sequence spans 555 residues: GPI-anchor transamidase component PIGS (555 aa).

Over 2–18 (AAAGAAATHLEVARGKR) the chain is Cytoplasmic. Residues Arg-15 and Arg-18 each coordinate a cardiolipin. The chain crosses the membrane as a helical span at residues 19 to 39 (AALFFAAVAIVLGLPLWWKTT). Topologically, residues 40–517 (ETYRASLPYS…LHLLYFPDDQ (478 aa)) are lumenal. Residues Asn-267 and Asn-370 are each glycosylated (N-linked (GlcNAc...) asparagine). A helical membrane pass occupies residues 518–532 (KFAIYIPLFLPMAVP). Over 533-555 (ILLSLVKIFLETRKSWRKPEKTD) the chain is Cytoplasmic.

It belongs to the PIGS family. Heteropentamer. Part of the GPI-anchor transamidase complex, consisting of PIGK, PIGT, PIGS, PIGU and GAA1.

The protein localises to the endoplasmic reticulum membrane. Its pathway is glycolipid biosynthesis; glycosylphosphatidylinositol-anchor biosynthesis. Functionally, component of the glycosylphosphatidylinositol-anchor (GPI-anchor) transamidase (GPI-T) complex that catalyzes the formation of the linkage between a proprotein and a GPI-anchor and participates in GPI anchored protein biosynthesis. The chain is GPI-anchor transamidase component PIGS from Homo sapiens (Human).